Reading from the N-terminus, the 537-residue chain is CTP synthase (537 aa).

Positions 1-265 are amidoligase domain; the sequence is MTKYIFVTGG…GKYLTKRLKL (265 aa). Position 13 (Ser13) interacts with CTP. Residue Ser13 participates in UTP binding. ATP is bound at residue 14–19; sequence GLGKGI. Residue Tyr54 participates in L-glutamine binding. Residue Asp71 coordinates ATP. Mg(2+) is bound by residues Asp71 and Glu139. Residues 146-148, 186-191, and Lys222 contribute to the CTP site; these read DIE and KTKPTQ. Residues 186–191 and Lys222 each bind UTP; that span reads KTKPTQ. One can recognise a Glutamine amidotransferase type-1 domain in the interval 290 to 532; it reads EIAIVGKYVK…VRAAKEYKQE (243 aa). Gly351 serves as a coordination point for L-glutamine. Catalysis depends on Cys378, which acts as the Nucleophile; for glutamine hydrolysis. L-glutamine-binding positions include 379–382, Glu402, and Arg459; that span reads FGFQ. Catalysis depends on residues His505 and Glu507.

This sequence belongs to the CTP synthase family. As to quaternary structure, homotetramer.

It carries out the reaction UTP + L-glutamine + ATP + H2O = CTP + L-glutamate + ADP + phosphate + 2 H(+). It catalyses the reaction L-glutamine + H2O = L-glutamate + NH4(+). The catalysed reaction is UTP + NH4(+) + ATP = CTP + ADP + phosphate + 2 H(+). Its pathway is pyrimidine metabolism; CTP biosynthesis via de novo pathway; CTP from UDP: step 2/2. With respect to regulation, allosterically activated by GTP, when glutamine is the substrate; GTP has no effect on the reaction when ammonia is the substrate. The allosteric effector GTP functions by stabilizing the protein conformation that binds the tetrahedral intermediate(s) formed during glutamine hydrolysis. Inhibited by the product CTP, via allosteric rather than competitive inhibition. Functionally, catalyzes the ATP-dependent amination of UTP to CTP with either L-glutamine or ammonia as the source of nitrogen. Regulates intracellular CTP levels through interactions with the four ribonucleotide triphosphates. The polypeptide is CTP synthase (Pyrococcus furiosus (strain ATCC 43587 / DSM 3638 / JCM 8422 / Vc1)).